Here is a 101-residue protein sequence, read N- to C-terminus: MRTYEVMYIIRPNIEEDAKKAVVERFNGILASHGSEVLEAKDWGKRRLAYEINDFSEGYYNIVRIQTADNEATDEFQRLAKISDDVIRYIVIREDEDKTRK.

It belongs to the bacterial ribosomal protein bS6 family.

In terms of biological role, binds together with bS18 to 16S ribosomal RNA. The protein is Small ribosomal subunit protein bS6 of Staphylococcus saprophyticus subsp. saprophyticus (strain ATCC 15305 / DSM 20229 / NCIMB 8711 / NCTC 7292 / S-41).